A 514-amino-acid chain; its full sequence is Na(+)/H(+) antiporter NhaB (514 aa).

Helical transmembrane passes span 23 to 43, 63 to 83, 97 to 117, 120 to 140, 144 to 164, 202 to 222, 238 to 258, 303 to 323, 357 to 377, 391 to 411, 447 to 467, and 475 to 495; these read LALL…PFIA, PLLP…TSAA, LLLM…LFIF, LLLS…AAAF, FLDA…FYGI, LMMH…VGEP, FFLR…LTCM, AVIG…VGLI, LTVF…APII, LFYL…VGTI, ATPN…APLI, and VWMA…CVEF.

The protein belongs to the NhaB Na(+)/H(+) (TC 2.A.34) antiporter family.

It localises to the cell inner membrane. The enzyme catalyses 2 Na(+)(in) + 3 H(+)(out) = 2 Na(+)(out) + 3 H(+)(in). Functionally, na(+)/H(+) antiporter that extrudes sodium in exchange for external protons. This is Na(+)/H(+) antiporter NhaB from Salmonella newport (strain SL254).